A 544-amino-acid polypeptide reads, in one-letter code: POTE ankyrin domain family member B2 (544 aa).

ANK repeat units lie at residues 135-167, 168-200, 201-233, 234-266, and 267-299; these read QKRTALHLASANGNSEVVQLLLDRRCQLNVLDN, KKRTALIKAVQCQEDECVLMLLEHGADGNIQDE, YGNTALHYAIYNEDKLMAKALLLYGADIESKNK, CGLTPLLLGVHEQKQEVVKFLIKKKANLNALDR, and YGRTALILAVCCGSASIVNLLLEQNVDVSSQDL. Positions 332–457 are disordered; sequence SSENSNPEQD…NTGISQDEIL (126 aa). Composition is skewed to basic and acidic residues over residues 340 to 355 and 364 to 375; these read QDLKLTSEEESQRLKV and MSQEPEINKDCD. Residues 439 to 457 show a composition bias toward polar residues; sequence TQKQLSEEQNTGISQDEIL.

This sequence belongs to the POTE family.

This chain is POTE ankyrin domain family member B2 (POTEB2), found in Homo sapiens (Human).